A 186-amino-acid polypeptide reads, in one-letter code: Protein GrpE (186 aa).

A compositionally biased stretch (basic and acidic residues) spans 1 to 22 (MSDSNKEKKKKFADMVSKRKGD). A disordered region spans residues 1 to 35 (MSDSNKEKKKKFADMVSKRKGDDQEDQQTGDLSEE). Residues 23 to 34 (DQEDQQTGDLSE) show a composition bias toward acidic residues.

It belongs to the GrpE family. As to quaternary structure, homodimer.

It is found in the cytoplasm. Functionally, participates actively in the response to hyperosmotic and heat shock by preventing the aggregation of stress-denatured proteins, in association with DnaK and GrpE. It is the nucleotide exchange factor for DnaK and may function as a thermosensor. Unfolded proteins bind initially to DnaJ; upon interaction with the DnaJ-bound protein, DnaK hydrolyzes its bound ATP, resulting in the formation of a stable complex. GrpE releases ADP from DnaK; ATP binding to DnaK triggers the release of the substrate protein, thus completing the reaction cycle. Several rounds of ATP-dependent interactions between DnaJ, DnaK and GrpE are required for fully efficient folding. In Wolbachia pipientis subsp. Culex pipiens (strain wPip), this protein is Protein GrpE.